Reading from the N-terminus, the 85-residue chain is Large ribosomal subunit protein bL27 (85 aa).

Residues 1-22 (MAHKKAGGSTNNGRDSESKRLG) are disordered.

This sequence belongs to the bacterial ribosomal protein bL27 family.

The chain is Large ribosomal subunit protein bL27 from Psychromonas ingrahamii (strain DSM 17664 / CCUG 51855 / 37).